The primary structure comprises 595 residues: NADH-quinone oxidoreductase subunit C/D (595 aa).

An NADH dehydrogenase I subunit C region spans residues 1-185 (MTDLTAQAAC…DPFELTKAKQ (185 aa)). The tract at residues 209–595 (DFMFLNLGPN…IDFVMSDVDR (387 aa)) is NADH dehydrogenase I subunit D.

It in the N-terminal section; belongs to the complex I 30 kDa subunit family. This sequence in the C-terminal section; belongs to the complex I 49 kDa subunit family. NDH-1 is composed of 13 different subunits. Subunits NuoB, CD, E, F, and G constitute the peripheral sector of the complex.

Its subcellular location is the cell inner membrane. It catalyses the reaction a quinone + NADH + 5 H(+)(in) = a quinol + NAD(+) + 4 H(+)(out). In terms of biological role, NDH-1 shuttles electrons from NADH, via FMN and iron-sulfur (Fe-S) centers, to quinones in the respiratory chain. The immediate electron acceptor for the enzyme in this species is believed to be ubiquinone. Couples the redox reaction to proton translocation (for every two electrons transferred, four hydrogen ions are translocated across the cytoplasmic membrane), and thus conserves the redox energy in a proton gradient. This Enterobacter sp. (strain 638) protein is NADH-quinone oxidoreductase subunit C/D.